The sequence spans 271 residues: Hydroxyethylthiazole kinase (271 aa).

M50 contributes to the substrate binding site. ATP-binding residues include R126 and T172. G199 lines the substrate pocket.

This sequence belongs to the Thz kinase family. Mg(2+) serves as cofactor.

It carries out the reaction 5-(2-hydroxyethyl)-4-methylthiazole + ATP = 4-methyl-5-(2-phosphooxyethyl)-thiazole + ADP + H(+). The protein operates within cofactor biosynthesis; thiamine diphosphate biosynthesis; 4-methyl-5-(2-phosphoethyl)-thiazole from 5-(2-hydroxyethyl)-4-methylthiazole: step 1/1. Functionally, catalyzes the phosphorylation of the hydroxyl group of 4-methyl-5-beta-hydroxyethylthiazole (THZ). This chain is Hydroxyethylthiazole kinase, found in Akkermansia muciniphila (strain ATCC BAA-835 / DSM 22959 / JCM 33894 / BCRC 81048 / CCUG 64013 / CIP 107961 / Muc).